Reading from the N-terminus, the 185-residue chain is Ribosome-recycling factor (185 aa).

Belongs to the RRF family.

The protein resides in the cytoplasm. Responsible for the release of ribosomes from messenger RNA at the termination of protein biosynthesis. May increase the efficiency of translation by recycling ribosomes from one round of translation to another. The chain is Ribosome-recycling factor from Xylella fastidiosa (strain Temecula1 / ATCC 700964).